Reading from the N-terminus, the 511-residue chain is Histidine ammonia-lyase (511 aa).

Positions alanine 142–glycine 144 form a cross-link, 5-imidazolinone (Ala-Gly). Serine 143 bears the 2,3-didehydroalanine (Ser) mark.

It belongs to the PAL/histidase family. In terms of processing, contains an active site 4-methylidene-imidazol-5-one (MIO), which is formed autocatalytically by cyclization and dehydration of residues Ala-Ser-Gly.

The protein resides in the cytoplasm. It carries out the reaction L-histidine = trans-urocanate + NH4(+). Its pathway is amino-acid degradation; L-histidine degradation into L-glutamate; N-formimidoyl-L-glutamate from L-histidine: step 1/3. The polypeptide is Histidine ammonia-lyase (Brucella suis biovar 1 (strain 1330)).